The chain runs to 147 residues: SsrA-binding protein (147 aa).

A disordered region spans residues 119–147 (AKGKKQHDKRESEKQKEWERDKQRLMRPK). The span at 126–147 (DKRESEKQKEWERDKQRLMRPK) shows a compositional bias: basic and acidic residues.

The protein belongs to the SmpB family.

The protein localises to the cytoplasm. Its function is as follows. Required for rescue of stalled ribosomes mediated by trans-translation. Binds to transfer-messenger RNA (tmRNA), required for stable association of tmRNA with ribosomes. tmRNA and SmpB together mimic tRNA shape, replacing the anticodon stem-loop with SmpB. tmRNA is encoded by the ssrA gene; the 2 termini fold to resemble tRNA(Ala) and it encodes a 'tag peptide', a short internal open reading frame. During trans-translation Ala-aminoacylated tmRNA acts like a tRNA, entering the A-site of stalled ribosomes, displacing the stalled mRNA. The ribosome then switches to translate the ORF on the tmRNA; the nascent peptide is terminated with the 'tag peptide' encoded by the tmRNA and targeted for degradation. The ribosome is freed to recommence translation, which seems to be the essential function of trans-translation. The protein is SsrA-binding protein of Nitrosospira multiformis (strain ATCC 25196 / NCIMB 11849 / C 71).